Reading from the N-terminus, the 234-residue chain is BTB/POZ domain-containing protein KCTD5 (234 aa).

Position 2 is an N-acetylalanine (Ala2). The region spanning 44–146 is the BTB domain; it reads KWVRLNVGGT…LVKDKIRERD (103 aa). The segment at 213–234 is disordered; it reads PYGTTSEPSEKAKILQERGSRM. The segment covering 220–234 has biased composition (basic and acidic residues); sequence PSEKAKILQERGSRM.

In terms of assembly, homopentamer. Interacts (via C-terminus) with GRASP55/GORASP2. Interacts with CUL3 and with ubiquitinated proteins. Interacts with CRY1.

Its subcellular location is the cytoplasm. It localises to the cytosol. It is found in the nucleus. Its function is as follows. Its interaction with CUL3 suggests that it may act as a substrate adapter in some E3 ligase complex. Does not affect the function of Kv channel Kv2.1/KCNB1, Kv1.2/KCNA2, Kv4.2/KCND2 and Kv3.4/KCNC4. The sequence is that of BTB/POZ domain-containing protein KCTD5 (Kctd5) from Mus musculus (Mouse).